A 627-amino-acid polypeptide reads, in one-letter code: ATP-dependent zinc metalloprotease FtsH 2 (627 aa).

Residues 1-7 lie on the Cytoplasmic side of the membrane; the sequence is MKFSWRT. Residues 8–28 traverse the membrane as a helical segment; the sequence is ALLWSLPLLVVGFFFWQGSFG. Residues 29 to 117 lie on the Lumenal side of the membrane; it reads GADANLGSNT…SHPVRNNGMV (89 aa). Residues 118–138 traverse the membrane as a helical segment; sequence WGFVGNLIFPVLLIASLFFLF. Residues 139–627 are Cytoplasmic-facing; sequence RRSSNMPGGP…PVKEQLIPQL (489 aa). 212–219 is an ATP binding site; it reads GPPGTGKT. H433 contributes to the Zn(2+) binding site. The active site involves E434. Zn(2+) is bound by residues H437 and D511.

This sequence in the central section; belongs to the AAA ATPase family. It in the C-terminal section; belongs to the peptidase M41 family. As to quaternary structure, homohexamer (Potential). Part of a large (&gt;500 kDa) complex that includes FtsH3 and PSII. Coimmunoprecipitates with YidC. It depends on Zn(2+) as a cofactor.

It localises to the cellular thylakoid membrane. Acts as a processive, ATP-dependent zinc metallopeptidase for both cytoplasmic and membrane proteins. Plays a role in the quality control of integral membrane proteins. In terms of biological role, plays a role in the selective replacement of photosystem II (PSII) protein D1 in the PSII repair cycle following visible-light and UV-B induced damage. If damaged D1 is not removed then new D1 cannot be inserted to restore the PSII reaction center. Seems to also degrade damaged and/or unassembled PSII proteins D2 and PsbB (CP47). May recognize D1 via its first 20 amino acids, as deletion of these prevents the PSII repair cycle. Also seems to degrade cytoplasmic GGPS, glucosylglycerol-phosphate synthase. This Synechocystis sp. (strain ATCC 27184 / PCC 6803 / Kazusa) protein is ATP-dependent zinc metalloprotease FtsH 2 (ftsH2).